Reading from the N-terminus, the 101-residue chain is uncharacterized protein (101 aa).

Residues 1–25 (MISIPFRSTMSRTLVFIILPTVLSC) form the signal peptide.

This is an uncharacterized protein from Saccharomyces cerevisiae (strain ATCC 204508 / S288c) (Baker's yeast).